We begin with the raw amino-acid sequence, 177 residues long: Insertion element IS1223 uncharacterized 20.7 kDa protein (177 aa).

The tract at residues 112 to 131 (KQKGRPRKVPKKSKKTTKKL) is disordered. The segment covering 113–128 (QKGRPRKVPKKSKKTT) has biased composition (basic residues).

The protein belongs to the IS150/IS1296 orfA family.

The chain is Insertion element IS1223 uncharacterized 20.7 kDa protein from Lactobacillus johnsonii.